We begin with the raw amino-acid sequence, 227 residues long: Ribosomal RNA large subunit methyltransferase E (227 aa).

5 residues coordinate S-adenosyl-L-methionine: glycine 78, tryptophan 80, aspartate 103, aspartate 119, and aspartate 143. The active-site Proton acceptor is lysine 183.

It belongs to the class I-like SAM-binding methyltransferase superfamily. RNA methyltransferase RlmE family.

It localises to the cytoplasm. The catalysed reaction is uridine(2552) in 23S rRNA + S-adenosyl-L-methionine = 2'-O-methyluridine(2552) in 23S rRNA + S-adenosyl-L-homocysteine + H(+). Specifically methylates the uridine in position 2552 of 23S rRNA at the 2'-O position of the ribose in the fully assembled 50S ribosomal subunit. The polypeptide is Ribosomal RNA large subunit methyltransferase E (Rickettsia typhi (strain ATCC VR-144 / Wilmington)).